Here is a 409-residue protein sequence, read N- to C-terminus: Tryptophan synthase beta chain (409 aa).

Residue Lys95 is modified to N6-(pyridoxal phosphate)lysine.

The protein belongs to the TrpB family. As to quaternary structure, tetramer of two alpha and two beta chains. Pyridoxal 5'-phosphate serves as cofactor.

The enzyme catalyses (1S,2R)-1-C-(indol-3-yl)glycerol 3-phosphate + L-serine = D-glyceraldehyde 3-phosphate + L-tryptophan + H2O. It functions in the pathway amino-acid biosynthesis; L-tryptophan biosynthesis; L-tryptophan from chorismate: step 5/5. The beta subunit is responsible for the synthesis of L-tryptophan from indole and L-serine. The protein is Tryptophan synthase beta chain of Pseudomonas syringae pv. syringae (strain B728a).